A 139-amino-acid chain; its full sequence is mRNA stability protein mug134 (139 aa).

Residues 83 to 139 (IGKEIPSPDTIPHRVVSAGSPNKEPSLHTKRPSESSPSGASSRRESVTRHDLESNEN) are disordered. The span at 124–139 (SRRESVTRHDLESNEN) shows a compositional bias: basic and acidic residues.

This sequence belongs to the endosulfine family.

It localises to the nucleus. It is found in the cytoplasm. Its function is as follows. Plays an essential role in initiation of the G0 program by preventing the degradation of specific nutrient-regulated mRNAs via the 5'-3' mRNA decay pathway. The chain is mRNA stability protein mug134 (mug134) from Schizosaccharomyces pombe (strain 972 / ATCC 24843) (Fission yeast).